The primary structure comprises 144 residues: Grifin (144 aa).

The 129-residue stretch at 5-133 (FEAFCAGGLA…DHQLAQVELA (129 aa)) folds into the Galectin domain. A Phosphoserine modification is found at S138.

As to quaternary structure, homodimer. In terms of tissue distribution, lens-specific. Located at the interface between lens fiber cells (at protein level).

The protein is Grifin (Grifin) of Rattus norvegicus (Rat).